The chain runs to 160 residues: Lymphocyte antigen 86 (160 aa).

Residues 1–20 (MKTLNVLALVLVLLCINAST) form the signal peptide. Cystine bridges form between Cys-28-Cys-53, Cys-40-Cys-149, and Cys-97-Cys-107.

In terms of assembly, M-shaped tetramer of two CD180-LY86 heterodimers. As to expression, detected in the macrophage-like 10.4 cells.

Its subcellular location is the secreted. The protein resides in the extracellular space. Functionally, may cooperate with CD180 and TLR4 to mediate the innate immune response to bacterial lipopolysaccharide (LPS) and cytokine production. Important for efficient CD180 cell surface expression. This chain is Lymphocyte antigen 86 (LY86), found in Gallus gallus (Chicken).